We begin with the raw amino-acid sequence, 293 residues long: Acetylglutamate kinase (293 aa).

Substrate is bound by residues 66 to 67 (GG), Arg-88, and Asn-190.

The protein belongs to the acetylglutamate kinase family. ArgB subfamily.

The protein localises to the cytoplasm. It carries out the reaction N-acetyl-L-glutamate + ATP = N-acetyl-L-glutamyl 5-phosphate + ADP. It functions in the pathway amino-acid biosynthesis; L-arginine biosynthesis; N(2)-acetyl-L-ornithine from L-glutamate: step 2/4. Catalyzes the ATP-dependent phosphorylation of N-acetyl-L-glutamate. The sequence is that of Acetylglutamate kinase from Thiobacillus denitrificans (strain ATCC 25259 / T1).